The primary structure comprises 864 residues: Nitrate reductase [NADH] (864 aa).

A Mo-molybdopterin-binding site is contributed by Cys-139. The Cytochrome b5 heme-binding domain occupies 497-572 (PRQYTMEEVA…LAQYYIGDLV (76 aa)). Residues His-532 and His-555 each contribute to the heme site. The 113-residue stretch at 606 to 718 (RQKVKLPLIE…KGPLGHFVYD (113 aa)) folds into the FAD-binding FR-type domain. Residues 658–661 (RAYT), 675–679 (LIKVY), Phe-680, Phe-687, 692–694 (KMS), and Thr-746 contribute to the FAD site.

It belongs to the nitrate reductase family. Homodimer. FAD is required as a cofactor. Heme serves as cofactor. It depends on Mo-molybdopterin as a cofactor.

The enzyme catalyses nitrite + NAD(+) + H2O = nitrate + NADH + H(+). Its function is as follows. Nitrate reductase is a key enzyme involved in the first step of nitrate assimilation in plants, fungi and bacteria. This chain is Nitrate reductase [NADH] (NITA), found in Volvox carteri (Green alga).